The chain runs to 251 residues: MVLLLLLVALLSPTGEAGKIIGGHEAKPHSRPYMAFLLFKTSGKSHICGGFLVREDFVLTAAHCLGSSINVTLGAHNIMERERTQQVIPVRRPIPHPDYNDETLANDIMLLKLTRKADITDKVSPINLPRSLAEVKPGMMCSVAGWGRLGVNMPSTDNLQEVDLEVQSEEKCIARFKNYIPFTQICAGDPSKRKNSFSGDSGGPLVCNGVAQGIVSYGRNDGTTPDVYTRISSFLSWIHSTMRRYKRQGSV.

The first 17 residues, 1 to 17 (MVLLLLLVALLSPTGEA), serve as a signal peptide directing secretion. Residues 18-19 (GK) constitute a propeptide that is removed on maturation. Positions 20–242 (IIGGHEAKPH…SFLSWIHSTM (223 aa)) constitute a Peptidase S1 domain. Cysteines 48 and 64 form a disulfide. His-63 functions as the Charge relay system in the catalytic mechanism. Asn-70 carries an N-linked (GlcNAc...) asparagine glycan. Asp-107 acts as the Charge relay system in catalysis. Intrachain disulfides connect Cys-141–Cys-207 and Cys-172–Cys-186. Residue Ser-201 is the Charge relay system of the active site.

Belongs to the peptidase S1 family. In terms of assembly, monomer.

Functionally, protease which has both trypsin-like and chymotrypsin-like activities. Shows a preferential cleavage after Lys, Arg, Tyr, Phe, and Leu residues. The polypeptide is Duodenase-1 (BDMD1) (Bos taurus (Bovine)).